Consider the following 239-residue polypeptide: Tryptophan synthase alpha chain (239 aa).

Active-site proton acceptor residues include Glu-34 and Asp-45.

It belongs to the TrpA family. As to quaternary structure, tetramer of two alpha and two beta chains.

It carries out the reaction (1S,2R)-1-C-(indol-3-yl)glycerol 3-phosphate + L-serine = D-glyceraldehyde 3-phosphate + L-tryptophan + H2O. It functions in the pathway amino-acid biosynthesis; L-tryptophan biosynthesis; L-tryptophan from chorismate: step 5/5. The alpha subunit is responsible for the aldol cleavage of indoleglycerol phosphate to indole and glyceraldehyde 3-phosphate. The sequence is that of Tryptophan synthase alpha chain from Thermotoga petrophila (strain ATCC BAA-488 / DSM 13995 / JCM 10881 / RKU-1).